We begin with the raw amino-acid sequence, 183 residues long: Ribonuclease H (183 aa).

Positions serine 2–arginine 151 constitute an RNase H type-1 domain. Aspartate 11, glutamate 57, aspartate 79, and aspartate 143 together coordinate Mg(2+).

It belongs to the RNase H family. Monomer. Mg(2+) is required as a cofactor.

It localises to the cytoplasm. The catalysed reaction is Endonucleolytic cleavage to 5'-phosphomonoester.. Endonuclease that specifically degrades the RNA of RNA-DNA hybrids. This chain is Ribonuclease H, found in Anaeromyxobacter dehalogenans (strain 2CP-C).